Here is a 316-residue protein sequence, read N- to C-terminus: Porphobilinogen deaminase (316 aa).

Cys240 carries the S-(dipyrrolylmethanemethyl)cysteine modification.

Belongs to the HMBS family. As to quaternary structure, monomer. It depends on dipyrromethane as a cofactor.

The catalysed reaction is 4 porphobilinogen + H2O = hydroxymethylbilane + 4 NH4(+). Its pathway is porphyrin-containing compound metabolism; protoporphyrin-IX biosynthesis; coproporphyrinogen-III from 5-aminolevulinate: step 2/4. Tetrapolymerization of the monopyrrole PBG into the hydroxymethylbilane pre-uroporphyrinogen in several discrete steps. The polypeptide is Porphobilinogen deaminase (Alkaliphilus metalliredigens (strain QYMF)).